We begin with the raw amino-acid sequence, 89 residues long: UPF0367 protein PCC8801_1959 (89 aa).

The protein belongs to the UPF0367 family.

The polypeptide is UPF0367 protein PCC8801_1959 (Rippkaea orientalis (strain PCC 8801 / RF-1) (Cyanothece sp. (strain PCC 8801))).